We begin with the raw amino-acid sequence, 261 residues long: Short-chain dehydrogenase/reductase AFUA_1G00990 (261 aa).

NADP(+) is bound by residues L19, D67, N94, Y169, K173, and T213. The Proton donor role is filled by Y169. K173 functions as the Lowers pKa of active site Tyr in the catalytic mechanism.

It belongs to the short-chain dehydrogenases/reductases (SDR) family.

In terms of biological role, short-chain dehydrogenase/reductase; part of the gene cluster that mediates the biosynthesis of fumigermin that inhibits germination of spores of the inducing S.rapamycinicus, and thus helps the fungus to defend resources in the shared habitat against a bacterial competitor. The partially reducing polyketide synthase fngA alone is sufficient for the production of fumigermin. FgnA catalyzes the condensation of 3 malonyl-CoA units to an acetyl-CoA starter, and 3 methylations to yield fumigermin. It is remarkable that the five cluster genes including fgnA are conserved in distantly related fungi, supporting the assumption of a fumigermin cluster; it is thus possible that originally all five genes were functional, but that the genes encoding tailoring enzymes became inactive from mutations, similar to the case of the fgnA gene in strains A1163 and Af293. The sequence is that of Short-chain dehydrogenase/reductase AFUA_1G00990 from Aspergillus fumigatus (strain ATCC MYA-4609 / CBS 101355 / FGSC A1100 / Af293) (Neosartorya fumigata).